Reading from the N-terminus, the 400-residue chain is Glycine betaine/proline betaine transport system ATP-binding protein ProV (400 aa).

The ABC transporter domain occupies 29–265; it reads LSKEQILEKT…PANDYVRTFF (237 aa). 61–68 lines the ATP pocket; the sequence is GLSGSGKS. CBS domains lie at 282 to 341 and 343 to 400; these read RTPN…GLDA and LIDA…VNNG.

The protein belongs to the ABC transporter superfamily. In terms of assembly, the complex is composed of two ATP-binding proteins (ProV), two transmembrane proteins (ProW) and a solute-binding protein (ProX).

The protein resides in the cell inner membrane. Functionally, part of the ProU ABC transporter complex involved in glycine betaine and proline betaine uptake. Probably responsible for energy coupling to the transport system. This Escherichia coli (strain K12) protein is Glycine betaine/proline betaine transport system ATP-binding protein ProV.